Consider the following 582-residue polypeptide: Hemagglutinin-neuraminidase (582 aa).

Topologically, residues 1-34 are intravirion; sequence MEPSKLFIMSDNATVAPGPVVNAAGKKTFRTCFR. Residues 35-55 form a helical; Signal-anchor for type II membrane protein membrane-spanning segment; sequence ILVLSVQAVTLILVIVTLGEL. The Virion surface portion of the chain corresponds to 56 to 582; it reads IRMINDQGLS…LPVLARLTIT (527 aa). 3 disulfide bridges follow: C178-C202, C192-C253, and C244-C257. Residues 240 to 245 form an involved in neuraminidase activity region; it reads NRKSCS. 2 N-linked (GlcNAc...) asparagine; by host glycosylation sites follow: N284 and N329. 3 cysteine pairs are disulfide-bonded: C350/C471, C382/C392, and C465/C475. N400 and N448 each carry an N-linked (GlcNAc...) asparagine; by host glycan. A glycan (N-linked (GlcNAc...) asparagine; by host) is linked at N507. C545 and C556 are joined by a disulfide.

The protein belongs to the paramyxoviruses hemagglutinin-neuraminidase family. As to quaternary structure, homotetramer; composed of disulfide-linked homodimers. Interacts with F protein trimer.

The protein resides in the virion membrane. It is found in the host cell membrane. It carries out the reaction Hydrolysis of alpha-(2-&gt;3)-, alpha-(2-&gt;6)-, alpha-(2-&gt;8)- glycosidic linkages of terminal sialic acid residues in oligosaccharides, glycoproteins, glycolipids, colominic acid and synthetic substrates.. Its function is as follows. Attaches the virus to alpha-2,3-linked sialic acid-containing cell receptors and thereby initiating infection. Binding of HN protein to the receptor induces a conformational change that allows the F protein to trigger virion/cell membranes fusion. Binds to the glycan motifs sialyl Lewis (SLe) and GM2 ganglioside (GM2-glycan). Neuraminidase activity ensures the efficient spread of the virus by dissociating the mature virions from the neuraminic acid containing glycoproteins. This Homo sapiens (Human) protein is Hemagglutinin-neuraminidase (HN).